A 464-amino-acid polypeptide reads, in one-letter code: UDP-glycosyltransferase 76F2 (464 aa).

UDP-alpha-D-glucose-binding positions include Ser279, Val338 to Gln340, His355 to Glu363, and Phe377 to Gln380.

The protein belongs to the UDP-glycosyltransferase family.

The sequence is that of UDP-glycosyltransferase 76F2 (UGT76F2) from Arabidopsis thaliana (Mouse-ear cress).